The primary structure comprises 357 residues: Serpentine receptor class epsilon-31 (357 aa).

7 consecutive transmembrane segments (helical) span residues 28-48, 61-81, 121-141, 165-185, 192-212, 253-273, and 283-303; these read VISI…NLSI, LMFL…GKFI, LLIF…FGIL, IPIF…FIVI, IIAR…WLFV, LVAV…SLTF, and FVEN…MFSI.

The protein belongs to the nematode receptor-like protein sre family.

The protein resides in the membrane. This is Serpentine receptor class epsilon-31 (sre-31) from Caenorhabditis elegans.